Consider the following 170-residue polypeptide: Peptide deformylase (170 aa).

The Fe cation site is built by Cys94 and His136. Residue Glu137 is part of the active site. His140 contacts Fe cation.

The protein belongs to the polypeptide deformylase family. Requires Fe(2+) as cofactor.

The enzyme catalyses N-terminal N-formyl-L-methionyl-[peptide] + H2O = N-terminal L-methionyl-[peptide] + formate. Removes the formyl group from the N-terminal Met of newly synthesized proteins. Requires at least a dipeptide for an efficient rate of reaction. N-terminal L-methionine is a prerequisite for activity but the enzyme has broad specificity at other positions. This chain is Peptide deformylase, found in Xylella fastidiosa (strain M12).